The sequence spans 63 residues: Large ribosomal subunit protein uL30 (63 aa).

The protein belongs to the universal ribosomal protein uL30 family. As to quaternary structure, part of the 50S ribosomal subunit.

The protein is Large ribosomal subunit protein uL30 of Granulibacter bethesdensis (strain ATCC BAA-1260 / CGDNIH1).